Consider the following 563-residue polypeptide: Membrane protein insertase YidC (563 aa).

The chain crosses the membrane as a helical span at residues threonine 6 to histidine 26. Residues proline 36–alanine 70 are disordered. Positions alanine 54–alanine 70 are enriched in low complexity. 4 helical membrane passes run tryptophan 373 to alanine 393, leucine 443 to valine 463, proline 482 to proline 502, and valine 512 to valine 532.

The protein belongs to the OXA1/ALB3/YidC family. Type 1 subfamily. As to quaternary structure, interacts with the Sec translocase complex via SecD. Specifically interacts with transmembrane segments of nascent integral membrane proteins during membrane integration.

The protein localises to the cell inner membrane. Its function is as follows. Required for the insertion and/or proper folding and/or complex formation of integral membrane proteins into the membrane. Involved in integration of membrane proteins that insert both dependently and independently of the Sec translocase complex, as well as at least some lipoproteins. Aids folding of multispanning membrane proteins. In Bordetella parapertussis (strain 12822 / ATCC BAA-587 / NCTC 13253), this protein is Membrane protein insertase YidC.